Reading from the N-terminus, the 1143-residue chain is FH2 domain-containing protein 1 (1143 aa).

The disordered stretch occupies residues 16–89 (GNIATAPGFM…PPTTHMNGYS (74 aa)). Composition is skewed to pro residues over residues 29–46 (TPPP…PSPP) and 56–80 (SSPP…PGLP). Residues 87-482 (GYSHLGKKKR…QLQRLKEQEQ (396 aa)) form the FH2 domain. A Phosphoserine modification is found at Ser-500. The interval 517-638 (PFLHPRPISP…NHASAFPRAR (122 aa)) is disordered. Low complexity predominate over residues 521–534 (PRPISPSSPSYRPP). Phosphoserine occurs at positions 650, 660, and 664. Residues 706–1143 (LESVGHRGPQ…LGRILNPLRK (438 aa)) are disordered. The segment covering 806–818 (GSMSSGVGEMGDS) has biased composition (low complexity). Over residues 848–861 (LPRDKPTKRKDVVA) the composition is skewed to basic and acidic residues. Polar residues predominate over residues 925 to 947 (RGPSQNPPSSTDTVWSRQNSVRR). A compositionally biased stretch (low complexity) spans 958–968 (PRGSSGSSSTR). The tract at residues 960 to 1086 (GSSGSSSTRP…DAAPKDSSTL (127 aa)) is MTBD; microtubule-binding domain. A compositionally biased stretch (basic and acidic residues) spans 995–1018 (QKPEENKTCRAHSEGPESPKEEPK). The span at 1036–1046 (ARNTVASSSRS) shows a compositional bias: polar residues. 2 stretches are compositionally biased toward basic and acidic residues: residues 1071–1080 (VKGDPEDAAP) and 1117–1130 (GAGE…KDSS).

Interacts with CEP170.

Its subcellular location is the cell projection. The protein localises to the cilium. It localises to the golgi apparatus. Microtubule-associated formin which regulates both actin and microtubule dynamics. Induces microtubule acetylation and stabilization and actin stress fiber formation. Regulates Golgi ribbon formation. Required for normal cilia assembly. Early in cilia assembly, may assist in the maturation and positioning of the centrosome/basal body, and once cilia assembly has initiated, may also promote cilia elongation by inhibiting disassembly. In Homo sapiens (Human), this protein is FH2 domain-containing protein 1 (FHDC1).